A 238-amino-acid polypeptide reads, in one-letter code: DNA damage-regulated autophagy modulator protein 1 (238 aa).

The next 6 membrane-spanning stretches (helical) occupy residues 9–29 (AFVP…SYVV), 53–73 (SGIF…TMYT), 91–111 (VFNL…GIVA), 116–136 (LAVP…GVVY), 161–181 (MVIS…ASLI), and 200–220 (VSAI…LTFI).

The protein belongs to the DRAM/TMEM150 family.

The protein localises to the lysosome membrane. Lysosomal modulator of autophagy that plays a central role in p53/TP53-mediated apoptosis. Not involved in p73/TP73-mediated autophagy. This Homo sapiens (Human) protein is DNA damage-regulated autophagy modulator protein 1 (DRAM1).